The following is a 458-amino-acid chain: MSSGRIVQIIGAVIDVEFPRDSVPSIYDALKVQGAETTLEVQQQLGDGVVRTIAMGSTEGLKRGLDVNNTGAAISVPVGKATLGRIMDVLGNPIDEAGPIGEEERWGIHRPAPSFAEQAGGNDLLETGIKVIDLVCPFAKGGKVGLFGGAGVGKTVNMMELIRNIAIEHSGYSVFAGVGERTREGNDFYHEMKDSNVLDKVALVYGQMNEPPGNRLRVALTGLTMAEKFRDEGNDVLLFVDNIYRYTLAGTEVSALLGRMPSAVGYQPTLAEEMGVLQERITSTKQGSITSIQAVYVPADDLTDPSPATTFAHLDATVVLSRDIASLGIYPAVDPLDSTSRQLDPNVIGNEHYETARGVQYVLQRYKELKDIIAILGMDELSETDKQLVSRARKIQRFLSQPFFVAEVFTGSPGKYVSLKDTIAGFKGILNGDYDHLPEQAFYMVGGIDEAIEKAKKL.

An ATP-binding site is contributed by 148–155 (GGAGVGKT).

This sequence belongs to the ATPase alpha/beta chains family. In terms of assembly, F-type ATPases have 2 components, CF(1) - the catalytic core - and CF(0) - the membrane proton channel. CF(1) has five subunits: alpha(3), beta(3), gamma(1), delta(1), epsilon(1). CF(0) has three main subunits: a(1), b(2) and c(9-12). The alpha and beta chains form an alternating ring which encloses part of the gamma chain. CF(1) is attached to CF(0) by a central stalk formed by the gamma and epsilon chains, while a peripheral stalk is formed by the delta and b chains.

It localises to the cell inner membrane. The catalysed reaction is ATP + H2O + 4 H(+)(in) = ADP + phosphate + 5 H(+)(out). Functionally, produces ATP from ADP in the presence of a proton gradient across the membrane. The catalytic sites are hosted primarily by the beta subunits. This is ATP synthase subunit beta from Pseudomonas fluorescens (strain ATCC BAA-477 / NRRL B-23932 / Pf-5).